The sequence spans 877 residues: GPI ethanolamine phosphate transferase 2 (877 aa).

Asparagine 190 and asparagine 368 each carry an N-linked (GlcNAc...) asparagine glycan. 5 helical membrane-spanning segments follow: residues 409–429, 443–463, 464–484, 528–548, and 570–590; these read VDIYIGLSILVAMAIVAFGLF, YNWYFIGISIVYSIHFHASSL, IEEEYQIWWFFSIICLFALYF, VDLLWVLNIATYFLTAILIYS, and DFGSLVTFIVTFVTCSISFSF. N-linked (GlcNAc...) asparagine glycosylation occurs at asparagine 611. 6 consecutive transmembrane segments (helical) span residues 634 to 654, 683 to 703, 716 to 736, 758 to 778, 817 to 837, and 854 to 876; these read IHLSKILFYCIGVLIIVRIVL, EIVPIFLIFSLVKFSAAKLLA, LMIIITLFSLCMQNLSFFSMG, VFLVGVLTYCSNFAGPIFWSL, LAGFLFYSMAGLSLVASCFNL, and FASWTLLTNILIDTISSLSILAL.

Belongs to the PIGG/PIGN/PIGO family. PIGG subfamily.

It is found in the endoplasmic reticulum membrane. The protein operates within glycolipid biosynthesis; glycosylphosphatidylinositol-anchor biosynthesis. In terms of biological role, ethanolamine phosphate transferase involved in glycosylphosphatidylinositol-anchor biosynthesis. Transfers ethanolamine phosphate to the GPI second mannose. This Debaryomyces hansenii (strain ATCC 36239 / CBS 767 / BCRC 21394 / JCM 1990 / NBRC 0083 / IGC 2968) (Yeast) protein is GPI ethanolamine phosphate transferase 2 (LAS21).